The chain runs to 525 residues: BTB/POZ domain-containing protein 2 (525 aa).

The tract at residues 1 to 86 (MAAGGSGGRA…AEEAAGPGAA (86 aa)) is disordered. Gly residues predominate over residues 16–26 (VGVGPGTGGSP). Low complexity predominate over residues 27–55 (GPSANAAATPAPGNAAAAAAAAAAAAAAP). Over residues 56–65 (GPTPPAPPGP) the composition is skewed to pro residues. Positions 66–86 (GTDAQAAGAERAEEAAGPGAA) are enriched in low complexity. One can recognise a BTB domain in the interval 117–187 (CDVHFLVGKG…LYSDEVQIGP (71 aa)).

Interacts with topoisomerase 1 and with TRIM5 isoform Delta.

The protein resides in the cytoplasm. The sequence is that of BTB/POZ domain-containing protein 2 (BTBD2) from Homo sapiens (Human).